Reading from the N-terminus, the 439-residue chain is 3-phosphoshikimate 1-carboxyvinyltransferase (439 aa).

3-phosphoshikimate-binding residues include Lys-27, Ser-28, and Arg-32. Lys-27 contacts phosphoenolpyruvate. Residues Gly-101 and Arg-130 each contribute to the phosphoenolpyruvate site. Ser-175, Gln-177, Asp-326, and Lys-353 together coordinate 3-phosphoshikimate. Position 177 (Gln-177) interacts with phosphoenolpyruvate. Asp-326 acts as the Proton acceptor in catalysis. Residues Arg-357 and Arg-399 each contribute to the phosphoenolpyruvate site.

Belongs to the EPSP synthase family. As to quaternary structure, monomer.

The protein resides in the cytoplasm. It catalyses the reaction 3-phosphoshikimate + phosphoenolpyruvate = 5-O-(1-carboxyvinyl)-3-phosphoshikimate + phosphate. It participates in metabolic intermediate biosynthesis; chorismate biosynthesis; chorismate from D-erythrose 4-phosphate and phosphoenolpyruvate: step 6/7. Catalyzes the transfer of the enolpyruvyl moiety of phosphoenolpyruvate (PEP) to the 5-hydroxyl of shikimate-3-phosphate (S3P) to produce enolpyruvyl shikimate-3-phosphate and inorganic phosphate. This Synechococcus sp. (strain WH7803) protein is 3-phosphoshikimate 1-carboxyvinyltransferase.